A 481-amino-acid polypeptide reads, in one-letter code: UDP-N-acetylmuramate--L-alanine ligase (481 aa).

Residue 126–132 (GTHGKTT) participates in ATP binding.

It belongs to the MurCDEF family.

Its subcellular location is the cytoplasm. The enzyme catalyses UDP-N-acetyl-alpha-D-muramate + L-alanine + ATP = UDP-N-acetyl-alpha-D-muramoyl-L-alanine + ADP + phosphate + H(+). It functions in the pathway cell wall biogenesis; peptidoglycan biosynthesis. Its function is as follows. Cell wall formation. This is UDP-N-acetylmuramate--L-alanine ligase from Marinobacter nauticus (strain ATCC 700491 / DSM 11845 / VT8) (Marinobacter aquaeolei).